Here is a 1461-residue protein sequence, read N- to C-terminus: Pleiotropic drug resistance protein 2 (1461 aa).

Positions Leu172–Glu445 constitute an ABC transporter 1 domain. Position 205-212 (Gly205–Thr212) interacts with ATP. In terms of domain architecture, ABC transmembrane type-2 1 spans Glu523 to Phe736. A run of 6 helical transmembrane segments spans residues Phe541 to Phe561, Phe577 to Ala597, Leu622 to Leu642, Leu660 to Ala680, Val685 to Ile705, and Ile771 to Leu791. The 253-residue stretch at Leu859–Pro1111 folds into the ABC transporter 2 domain. Gly904–Thr911 contributes to the ATP binding site. The region spanning Thr1184 to Val1398 is the ABC transmembrane type-2 2 domain. The next 7 helical transmembrane spans lie at Tyr1203–Trp1223, Tyr1243–Ile1263, Thr1291–Tyr1311, Phe1321–Ala1341, Ile1348–Ile1368, Trp1379–Gly1399, and Phe1430–Ala1450.

Belongs to the ABC transporter superfamily. ABCG family. PDR (TC 3.A.1.205) subfamily.

The protein resides in the membrane. In terms of biological role, may be a general defense protein. This chain is Pleiotropic drug resistance protein 2 (PDR2), found in Nicotiana plumbaginifolia (Leadwort-leaved tobacco).